Here is a 320-residue protein sequence, read N- to C-terminus: ATP-dependent 6-phosphofructokinase isozyme 1 (320 aa).

Gly-12 contacts ATP. Residues 22 to 26 and 55 to 60 each bind ADP; these read RGVVR and RYSVSD. Residues 73 to 74 and 103 to 106 each bind ATP; these read RF and GDGS. Asp-104 serves as a coordination point for Mg(2+). Substrate is bound at residue 126 to 128; the sequence is TID. Asp-128 serves as the catalytic Proton acceptor. Arg-155 is a binding site for ADP. Substrate is bound by residues Arg-163 and 170–172; that span reads MGR. ADP is bound by residues 186–188, Lys-212, and 214–216; these read GCE and KKH. Residues Glu-223, Arg-244, and 250-253 each bind substrate; that span reads HIQR.

This sequence belongs to the phosphofructokinase type A (PFKA) family. ATP-dependent PFK group I subfamily. Prokaryotic clade 'B1' sub-subfamily. Homotetramer. Mg(2+) is required as a cofactor.

The protein resides in the cytoplasm. It catalyses the reaction beta-D-fructose 6-phosphate + ATP = beta-D-fructose 1,6-bisphosphate + ADP + H(+). It participates in carbohydrate degradation; glycolysis; D-glyceraldehyde 3-phosphate and glycerone phosphate from D-glucose: step 3/4. Its activity is regulated as follows. Allosterically activated by ADP and other diphosphonucleosides, and allosterically inhibited by phosphoenolpyruvate. In terms of biological role, catalyzes the phosphorylation of D-fructose 6-phosphate to fructose 1,6-bisphosphate by ATP, the first committing step of glycolysis. The protein is ATP-dependent 6-phosphofructokinase isozyme 1 of Escherichia coli O6:H1 (strain CFT073 / ATCC 700928 / UPEC).